A 348-amino-acid polypeptide reads, in one-letter code: Dihydroorotase (348 aa).

H17 and H19 together coordinate Zn(2+). Substrate contacts are provided by residues 19–21 (HLR) and N45. Residues K103, H140, and H178 each contribute to the Zn(2+) site. K103 carries the N6-carboxylysine modification. A substrate-binding site is contributed by H140. Substrate is bound at residue L223. D251 contributes to the Zn(2+) binding site. D251 is an active-site residue. The substrate site is built by H255 and A267.

The protein belongs to the metallo-dependent hydrolases superfamily. DHOase family. Class II DHOase subfamily. In terms of assembly, homodimer. Requires Zn(2+) as cofactor.

It carries out the reaction (S)-dihydroorotate + H2O = N-carbamoyl-L-aspartate + H(+). Its pathway is pyrimidine metabolism; UMP biosynthesis via de novo pathway; (S)-dihydroorotate from bicarbonate: step 3/3. In terms of biological role, catalyzes the reversible cyclization of carbamoyl aspartate to dihydroorotate. The polypeptide is Dihydroorotase (Edwardsiella ictaluri (strain 93-146)).